The following is a 642-amino-acid chain: ATP-dependent rRNA helicase spb4 (642 aa).

Positions 14–42 (WDGVTPALSEWVLDAVASMGFTRMTPVQA) match the Q motif motif. The Helicase ATP-binding domain occupies 45–250 (IPLFMAHKDV…RVGLRNPVKV (206 aa)). Position 58-65 (58-65 (AVTGSGKT)) interacts with ATP. Positions 198-201 (DEAD) match the DEAD box motif. The Helicase C-terminal domain maps to 284-438 (AIKHILYSLE…TLTITDADAA (155 aa)). Positions 522-625 (AYKDKQREKR…RLLRRAAKDK (104 aa)) form a coiled coil. Composition is skewed to basic and acidic residues over residues 527–536 (QREKRRKEQV) and 577–628 (AKQA…KESK). The interval 527–642 (QREKRRKEQV…DDDDEFKGFD (116 aa)) is disordered. Over residues 632 to 642 (GDDDDEFKGFD) the composition is skewed to acidic residues.

It belongs to the DEAD box helicase family. DDX55/SPB4 subfamily. Component of pre-60S ribosomal complexes.

It localises to the nucleus. Its subcellular location is the nucleolus. It carries out the reaction ATP + H2O = ADP + phosphate + H(+). Functionally, ATP-binding RNA helicase involved in the biogenesis of 60S ribosomal subunits. Binds 90S pre-ribosomal particles and dissociates from pre-60S ribosomal particles after processing of 27SB pre-rRNA. Required for the normal formation of 18S rRNA through the processing of pre-rRNAs at sites A0, A1 and A2, and the normal formation of 25S and 5.8S rRNAs through the processing of pre-rRNAs at sites C1 and C2. This is ATP-dependent rRNA helicase spb4 from Aspergillus niger (strain ATCC MYA-4892 / CBS 513.88 / FGSC A1513).